Here is a 512-residue protein sequence, read N- to C-terminus: MVTLDGSSLTTADAQRVLFDFEEVQASAESMERVKKSRAAVERIVQEEKTIYGITTGFGKFSDVLIQKEDAADLQLNLILSHACGVGDPFPESVSRAMLLLRANALLKGFSGVRTELIDQLLAYLNHRIHPVIPQQGSLGASGDLAPLSHLALALIGQGEVFYEGARMPTAHALEQTNLQPAVLTSKEGLALINGTQAMTAMGLIAYLEAEKLAYQSERIASLTIEGLQGIIDAFDEDIHAARGYQEQMDVAERIRYYLSDSKLTTVQGELRVQDAYSIRCIPQVHGASWQTLAYVKEKLEIEMNAATDNPLIFEDGAKIISGGNFHGQPIAFAMDFLKVAAAELANISERRIERLVNPQLNDLPPFLSPQPGLQSGAMIMQYAAASLVSENKTLAHPASVDSIPSSANQEDHVSMGTIASRHAYQIIANTRRVLAVEAICALQAVEYRGEEHCASYTKQLYHEMRNIVPSIQEDRVFSYDIEHLSDWLKKESFLPNEHHQKLMTNEGGLTR.

Residues 141–143 constitute a cross-link (5-imidazolinone (Ala-Gly)); that stretch reads ASG. Serine 142 is subject to 2,3-didehydroalanine (Ser).

Belongs to the PAL/histidase family. Post-translationally, contains an active site 4-methylidene-imidazol-5-one (MIO), which is formed autocatalytically by cyclization and dehydration of residues Ala-Ser-Gly.

Its subcellular location is the cytoplasm. The catalysed reaction is L-histidine = trans-urocanate + NH4(+). The protein operates within amino-acid degradation; L-histidine degradation into L-glutamate; N-formimidoyl-L-glutamate from L-histidine: step 1/3. This chain is Histidine ammonia-lyase, found in Bacillus velezensis (strain DSM 23117 / BGSC 10A6 / LMG 26770 / FZB42) (Bacillus amyloliquefaciens subsp. plantarum).